The following is a 325-amino-acid chain: Solute carrier family 35 member B1 (325 aa).

8 helical membrane-spanning segments follow: residues 18–38, 54–74, 88–108, 139–159, 171–191, 213–233, 246–266, and 288–308; these read PVCF…QESI, FALS…KLLI, WLYA…NSAL, YPLA…LFMY, IFGY…LTGV, LWST…WEFL, ILLF…TVVY, and VILF…LVFL. A Di-lysine motif motif is present at residues 321–325; that stretch reads KKTSH.

It belongs to the nucleotide-sugar transporter family. SLC35B subfamily.

It localises to the endoplasmic reticulum membrane. In terms of biological role, probable sugar transporter. The polypeptide is Solute carrier family 35 member B1 (SLC35B1) (Gallus gallus (Chicken)).